The sequence spans 408 residues: Acetate kinase (408 aa).

Residue N10 participates in Mg(2+) binding. K17 provides a ligand contact to ATP. R96 provides a ligand contact to substrate. The Proton donor/acceptor role is filled by D153. ATP is bound by residues 213–217 and 288–290; these read HLGNG and DLR. E393 lines the Mg(2+) pocket.

Belongs to the acetokinase family. As to quaternary structure, homodimer. It depends on Mg(2+) as a cofactor. Mn(2+) serves as cofactor.

The protein localises to the cytoplasm. It carries out the reaction acetate + ATP = acetyl phosphate + ADP. It functions in the pathway metabolic intermediate biosynthesis; acetyl-CoA biosynthesis; acetyl-CoA from acetate: step 1/2. Functionally, catalyzes the formation of acetyl phosphate from acetate and ATP. Can also catalyze the reverse reaction. This is Acetate kinase from Borrelia duttonii (strain Ly).